Here is a 58-residue protein sequence, read N- to C-terminus: Ribosome modulation factor (58 aa).

The interval 1-28 is disordered; sequence MKRQKRDRFERAHTQGFKAGLHGRSKDN.

This sequence belongs to the ribosome modulation factor family.

It localises to the cytoplasm. Functionally, during stationary phase, converts 70S ribosomes to an inactive dimeric form (100S ribosomes). The sequence is that of Ribosome modulation factor from Idiomarina loihiensis (strain ATCC BAA-735 / DSM 15497 / L2-TR).